Consider the following 140-residue polypeptide: Blasticidin-S deaminase (140 aa).

In terms of domain architecture, CMP/dCMP-type deaminase spans 8–140 (QQDLELVEVA…ELIPLKYTRN (133 aa)). Cys59 is a binding site for Zn(2+). The active-site Proton donor is the Glu61. Residues Cys100 and Cys103 each coordinate Zn(2+).

This sequence belongs to the cytidine and deoxycytidylate deaminase family. Requires Zn(2+) as cofactor.

The enzyme catalyses blasticidin S + H2O + H(+) = deaminohydroxyblasticidin S + NH4(+). In terms of biological role, catalyzes the deamination of the cytosine moiety of the antibiotics blasticidin S, cytomycin and acetylblasticidin S. This Bacillus cereus protein is Blasticidin-S deaminase (bsr).